The primary structure comprises 565 residues: MNYEGARSERENHAADDSEGGALDMCCSERLPGLPQPIVMEALDEAEGLQDSQREMPPPPPPSPPSDPAQKPPPRGAGSHSLTVRSSLCLFAASQFLLACGVLWFSGYGHIWSQNATNLVSSLLTLLKQLEPTAWLDSGTWGVPSLLLVFLSVGLVLVTTLVWHLLRTPPEPPTPLPPEDRRQSVSRQPSFTYSEWMEEKIEDDFLDLDPVPETPVFDCVMDIKPEADPTSLTVKSMGLQERRGSNVSLTLDMCTPGCNEEGFGYLMSPREESAREYLLSASRVLQAEELHEKALDPFLLQAEFFEIPMNFVDPKEYDIPGLVRKNRYKTILPNPHSRVCLTSPDPDDPLSSYINANYIRGYGGEEKVYIATQGPIVSTVADFWRMVWQEHTPIIVMITNIEEMNEKCTEYWPEEQVAYDGVEITVQKVIHTEDYRLRLISLKSGTEERGLKHYWFTSWPDQKTPDRAPPLLHLVREVEEAAQQEGPHCAPIIVHCSAGIGRTGCFIATSICCQQLRQEGVVDILKTTCQLRQDRGGMIQTCEQYQFVHHVMSLYEKQLSHQSPE.

Over residues 1–16 (MNYEGARSERENHAAD) the composition is skewed to basic and acidic residues. Residues 1–80 (MNYEGARSER…KPPPRGAGSH (80 aa)) form a disordered region. Residues 56-75 (MPPPPPPSPPSDPAQKPPPR) are compositionally biased toward pro residues. Transmembrane regions (helical) follow at residues 88 to 108 (LCLFAASQFLLACGVLWFSGY) and 146 to 166 (LLLVFLSVGLVLVTTLVWHLL). A disordered region spans residues 169 to 189 (PPEPPTPLPPEDRRQSVSRQP). The residue at position 245 (Ser-245) is a Phosphoserine; by PKA. A Phosphothreonine; by MAPK modification is found at Thr-255. Phosphoserine; by MAPK is present on Ser-268. Positions 300 to 555 (LQAEFFEIPM…QFVHHVMSLY (256 aa)) constitute a Tyrosine-protein phosphatase domain. Residues Asp-461, 496-502 (CSAGIGR), and Gln-540 contribute to the substrate site. Cys-496 functions as the Phosphocysteine intermediate in the catalytic mechanism.

It belongs to the protein-tyrosine phosphatase family. Non-receptor class subfamily. Post-translationally, phosphorylation at Ser-245 by PKA deactivates PTPN5. Phosphorylation at Thr-255 and Ser-268 by MAPKs stabilizes the phosphatase, dephosphorylation of these sites results in ubiquitin-mediated degradation of the active phosphatase.

The protein localises to the endoplasmic reticulum membrane. It carries out the reaction O-phospho-L-tyrosyl-[protein] + H2O = L-tyrosyl-[protein] + phosphate. Functionally, may regulate the activity of several effector molecules involved in synaptic plasticity and neuronal cell survival, including MAPKs, Src family kinases and NMDA receptors. The protein is Tyrosine-protein phosphatase non-receptor type 5 (PTPN5) of Homo sapiens (Human).